Here is a 378-residue protein sequence, read N- to C-terminus: UDP-N-acetylglucosamine--N-acetylmuramyl-(pentapeptide) pyrophosphoryl-undecaprenol N-acetylglucosamine transferase (378 aa).

Residues 14–16 (TGG), asparagine 125, arginine 165, serine 193, and glutamine 293 contribute to the UDP-N-acetyl-alpha-D-glucosamine site.

Belongs to the glycosyltransferase 28 family. MurG subfamily.

The protein resides in the cell inner membrane. It catalyses the reaction di-trans,octa-cis-undecaprenyl diphospho-N-acetyl-alpha-D-muramoyl-L-alanyl-D-glutamyl-meso-2,6-diaminopimeloyl-D-alanyl-D-alanine + UDP-N-acetyl-alpha-D-glucosamine = di-trans,octa-cis-undecaprenyl diphospho-[N-acetyl-alpha-D-glucosaminyl-(1-&gt;4)]-N-acetyl-alpha-D-muramoyl-L-alanyl-D-glutamyl-meso-2,6-diaminopimeloyl-D-alanyl-D-alanine + UDP + H(+). It participates in cell wall biogenesis; peptidoglycan biosynthesis. Functionally, cell wall formation. Catalyzes the transfer of a GlcNAc subunit on undecaprenyl-pyrophosphoryl-MurNAc-pentapeptide (lipid intermediate I) to form undecaprenyl-pyrophosphoryl-MurNAc-(pentapeptide)GlcNAc (lipid intermediate II). The protein is UDP-N-acetylglucosamine--N-acetylmuramyl-(pentapeptide) pyrophosphoryl-undecaprenol N-acetylglucosamine transferase of Bartonella bacilliformis (strain ATCC 35685 / KC583 / Herrer 020/F12,63).